Reading from the N-terminus, the 330-residue chain is Ketol-acid reductoisomerase (NADP(+)) (330 aa).

One can recognise a KARI N-terminal Rossmann domain in the interval A2–T181. Residues Y25–Q28, R48, S52, and D82–Q85 each bind NADP(+). The active site involves H107. Position 133 (G133) interacts with NADP(+). The KARI C-terminal knotted domain occupies T182–I327. Mg(2+) is bound by residues D190, E194, E226, and E230. S251 is a binding site for substrate.

Belongs to the ketol-acid reductoisomerase family. It depends on Mg(2+) as a cofactor.

It carries out the reaction (2R)-2,3-dihydroxy-3-methylbutanoate + NADP(+) = (2S)-2-acetolactate + NADPH + H(+). It catalyses the reaction (2R,3R)-2,3-dihydroxy-3-methylpentanoate + NADP(+) = (S)-2-ethyl-2-hydroxy-3-oxobutanoate + NADPH + H(+). It participates in amino-acid biosynthesis; L-isoleucine biosynthesis; L-isoleucine from 2-oxobutanoate: step 2/4. Its pathway is amino-acid biosynthesis; L-valine biosynthesis; L-valine from pyruvate: step 2/4. Its function is as follows. Involved in the biosynthesis of branched-chain amino acids (BCAA). Catalyzes an alkyl-migration followed by a ketol-acid reduction of (S)-2-acetolactate (S2AL) to yield (R)-2,3-dihydroxy-isovalerate. In the isomerase reaction, S2AL is rearranged via a Mg-dependent methyl migration to produce 3-hydroxy-3-methyl-2-ketobutyrate (HMKB). In the reductase reaction, this 2-ketoacid undergoes a metal-dependent reduction by NADPH to yield (R)-2,3-dihydroxy-isovalerate. The sequence is that of Ketol-acid reductoisomerase (NADP(+)) from Macrococcus caseolyticus (strain JCSC5402) (Macrococcoides caseolyticum).